The chain runs to 281 residues: ATP phosphoribosyltransferase (281 aa).

The protein belongs to the ATP phosphoribosyltransferase family. Long subfamily. Requires Mg(2+) as cofactor.

The protein resides in the cytoplasm. The enzyme catalyses 1-(5-phospho-beta-D-ribosyl)-ATP + diphosphate = 5-phospho-alpha-D-ribose 1-diphosphate + ATP. It participates in amino-acid biosynthesis; L-histidine biosynthesis; L-histidine from 5-phospho-alpha-D-ribose 1-diphosphate: step 1/9. Feedback inhibited by histidine. Its function is as follows. Catalyzes the condensation of ATP and 5-phosphoribose 1-diphosphate to form N'-(5'-phosphoribosyl)-ATP (PR-ATP). Has a crucial role in the pathway because the rate of histidine biosynthesis seems to be controlled primarily by regulation of HisG enzymatic activity. The polypeptide is ATP phosphoribosyltransferase (Salinispora tropica (strain ATCC BAA-916 / DSM 44818 / JCM 13857 / NBRC 105044 / CNB-440)).